A 170-amino-acid chain; its full sequence is uncharacterized protein (170 aa).

The signal sequence occupies residues 1-26; the sequence is MLKKKWMVGLLAGCLAAGGFSYNAFA.

This is an uncharacterized protein from Bacillus subtilis (strain 168).